A 453-amino-acid polypeptide reads, in one-letter code: Phosphoglucosamine mutase (453 aa).

S110 functions as the Phosphoserine intermediate in the catalytic mechanism. 4 residues coordinate Mg(2+): S110, D247, D249, and D251. S110 carries the phosphoserine modification.

This sequence belongs to the phosphohexose mutase family. Requires Mg(2+) as cofactor. Activated by phosphorylation.

The enzyme catalyses alpha-D-glucosamine 1-phosphate = D-glucosamine 6-phosphate. Functionally, catalyzes the conversion of glucosamine-6-phosphate to glucosamine-1-phosphate. The sequence is that of Phosphoglucosamine mutase from Tropheryma whipplei (strain TW08/27) (Whipple's bacillus).